Reading from the N-terminus, the 290-residue chain is Uridine diphosphate glucose pyrophosphatase NUDT22 (290 aa).

The substrate site is built by Phe56, Tyr87, Arg139, Ala144, Asp151, His156, and Glu158. The 168-residue stretch at 118–285 folds into the Nudix hydrolase domain; it reads ADPLGVGAAL…KGAIFLYNRV (168 aa). The Nudix box motif lies at 175–196; that stretch reads GELVVHELFSSVLQEICDEVNV. 2 residues coordinate Mg(2+): Glu189 and Glu193. Ser274 serves as a coordination point for substrate.

Belongs to the Nudix family. The cofactor is Mg(2+).

The catalysed reaction is UDP-sugar + H2O = UMP + alpha-D-aldose 1-phosphate.. Functionally, hydrolyzes UDP-glucose to glucose 1-phosphate and UMP and UDP-galactose to galactose 1-phosphate and UMP. Preferred substrate is UDP-glucose. The chain is Uridine diphosphate glucose pyrophosphatase NUDT22 (NUDT22) from Bos taurus (Bovine).